We begin with the raw amino-acid sequence, 631 residues long: DNA mismatch repair protein MutL (631 aa).

This sequence belongs to the DNA mismatch repair MutL/HexB family.

Functionally, this protein is involved in the repair of mismatches in DNA. It is required for dam-dependent methyl-directed DNA mismatch repair. May act as a 'molecular matchmaker', a protein that promotes the formation of a stable complex between two or more DNA-binding proteins in an ATP-dependent manner without itself being part of a final effector complex. In Mannheimia succiniciproducens (strain KCTC 0769BP / MBEL55E), this protein is DNA mismatch repair protein MutL.